The chain runs to 393 residues: NAD(P)H-quinone oxidoreductase subunit H, chloroplastic (393 aa).

This sequence belongs to the complex I 49 kDa subunit family. As to quaternary structure, NDH is composed of at least 16 different subunits, 5 of which are encoded in the nucleus.

The protein resides in the plastid. It is found in the chloroplast thylakoid membrane. It catalyses the reaction a plastoquinone + NADH + (n+1) H(+)(in) = a plastoquinol + NAD(+) + n H(+)(out). The catalysed reaction is a plastoquinone + NADPH + (n+1) H(+)(in) = a plastoquinol + NADP(+) + n H(+)(out). In terms of biological role, NDH shuttles electrons from NAD(P)H:plastoquinone, via FMN and iron-sulfur (Fe-S) centers, to quinones in the photosynthetic chain and possibly in a chloroplast respiratory chain. The immediate electron acceptor for the enzyme in this species is believed to be plastoquinone. Couples the redox reaction to proton translocation, and thus conserves the redox energy in a proton gradient. This is NAD(P)H-quinone oxidoreductase subunit H, chloroplastic from Psilotum nudum (Whisk fern).